We begin with the raw amino-acid sequence, 115 residues long: Iron-sulfur cluster insertion protein ErpA (115 aa).

Iron-sulfur cluster is bound by residues Cys-43, Cys-107, and Cys-109.

It belongs to the HesB/IscA family. As to quaternary structure, homodimer. Requires iron-sulfur cluster as cofactor.

Its function is as follows. Required for insertion of 4Fe-4S clusters for at least IspG. This is Iron-sulfur cluster insertion protein ErpA from Buchnera aphidicola subsp. Baizongia pistaciae (strain Bp).